Reading from the N-terminus, the 820-residue chain is Phenylalanine--tRNA ligase beta subunit (820 aa).

Positions 42–154 constitute a tRNA-binding domain; the sequence is KGGLEGLVIG…EDAVPGTLAK (113 aa). The B5 domain maps to 413–489; sequence AQDFIVELTY…RIYGYNNVEI (77 aa). 4 residues coordinate Mg(2+): aspartate 467, aspartate 473, glutamate 476, and aspartate 477. In terms of domain architecture, FDX-ACB spans 727-820; it reads SKFPAVKRDL…LEDKLGAKLR (94 aa).

Belongs to the phenylalanyl-tRNA synthetase beta subunit family. Type 1 subfamily. As to quaternary structure, tetramer of two alpha and two beta subunits. Mg(2+) is required as a cofactor.

The protein resides in the cytoplasm. The catalysed reaction is tRNA(Phe) + L-phenylalanine + ATP = L-phenylalanyl-tRNA(Phe) + AMP + diphosphate + H(+). The polypeptide is Phenylalanine--tRNA ligase beta subunit (Bacteroides fragilis (strain YCH46)).